The primary structure comprises 456 residues: Bifunctional protein GlmU (456 aa).

The segment at M1–R229 is pyrophosphorylase. UDP-N-acetyl-alpha-D-glucosamine-binding positions include L11–G14, K25, Q76, G81–T82, Y103–D105, G140, E154, N169, and N227. Residue D105 coordinates Mg(2+). N227 contributes to the Mg(2+) binding site. Residues L230–S250 are linker. The tract at residues G251–K456 is N-acetyltransferase. Residues R333 and K351 each coordinate UDP-N-acetyl-alpha-D-glucosamine. H363 functions as the Proton acceptor in the catalytic mechanism. UDP-N-acetyl-alpha-D-glucosamine contacts are provided by Y366 and N377. Acetyl-CoA-binding positions include A380, N386–Y387, S405, A423, and R440.

In the N-terminal section; belongs to the N-acetylglucosamine-1-phosphate uridyltransferase family. It in the C-terminal section; belongs to the transferase hexapeptide repeat family. As to quaternary structure, homotrimer. Requires Mg(2+) as cofactor.

It is found in the cytoplasm. The catalysed reaction is alpha-D-glucosamine 1-phosphate + acetyl-CoA = N-acetyl-alpha-D-glucosamine 1-phosphate + CoA + H(+). It carries out the reaction N-acetyl-alpha-D-glucosamine 1-phosphate + UTP + H(+) = UDP-N-acetyl-alpha-D-glucosamine + diphosphate. It participates in nucleotide-sugar biosynthesis; UDP-N-acetyl-alpha-D-glucosamine biosynthesis; N-acetyl-alpha-D-glucosamine 1-phosphate from alpha-D-glucosamine 6-phosphate (route II): step 2/2. It functions in the pathway nucleotide-sugar biosynthesis; UDP-N-acetyl-alpha-D-glucosamine biosynthesis; UDP-N-acetyl-alpha-D-glucosamine from N-acetyl-alpha-D-glucosamine 1-phosphate: step 1/1. Its pathway is bacterial outer membrane biogenesis; LPS lipid A biosynthesis. Functionally, catalyzes the last two sequential reactions in the de novo biosynthetic pathway for UDP-N-acetylglucosamine (UDP-GlcNAc). The C-terminal domain catalyzes the transfer of acetyl group from acetyl coenzyme A to glucosamine-1-phosphate (GlcN-1-P) to produce N-acetylglucosamine-1-phosphate (GlcNAc-1-P), which is converted into UDP-GlcNAc by the transfer of uridine 5-monophosphate (from uridine 5-triphosphate), a reaction catalyzed by the N-terminal domain. In Salmonella paratyphi A (strain ATCC 9150 / SARB42), this protein is Bifunctional protein GlmU.